The primary structure comprises 706 residues: Polyribonucleotide nucleotidyltransferase (706 aa).

Positions 483 and 489 each coordinate Mg(2+). One can recognise a KH domain in the interval 550–609; sequence PRITTIWVKTDKIRDVIGTGGKNIRNITETTGVTVDIEDTGRINIASTSKEACDLAIQMI. Residues 619-687 enclose the S1 motif domain; that stretch reads GKLYMGIVKK…KNGKVKLSRK (69 aa).

The protein belongs to the polyribonucleotide nucleotidyltransferase family. Mg(2+) serves as cofactor.

Its subcellular location is the cytoplasm. The catalysed reaction is RNA(n+1) + phosphate = RNA(n) + a ribonucleoside 5'-diphosphate. Functionally, involved in mRNA degradation. Catalyzes the phosphorolysis of single-stranded polyribonucleotides processively in the 3'- to 5'-direction. The polypeptide is Polyribonucleotide nucleotidyltransferase (Pelobacter propionicus (strain DSM 2379 / NBRC 103807 / OttBd1)).